We begin with the raw amino-acid sequence, 37 residues long: MKVQPSVKRICDKCQVIRRHGRVLVICDNQRHKQRQG.

The protein belongs to the bacterial ribosomal protein bL36 family.

The polypeptide is Large ribosomal subunit protein bL36B (Saccharopolyspora erythraea (strain ATCC 11635 / DSM 40517 / JCM 4748 / NBRC 13426 / NCIMB 8594 / NRRL 2338)).